The primary structure comprises 270 residues: Formamidopyrimidine-DNA glycosylase (270 aa).

Residue P2 is the Schiff-base intermediate with DNA of the active site. The active-site Proton donor is E3. K58 functions as the Proton donor; for beta-elimination activity in the catalytic mechanism. The DNA site is built by H91, R110, and R151. The segment at 236–270 (FVYGRGGEFCKSCGSTLREIRLGQRASVYCSRCQR) adopts an FPG-type zinc-finger fold. The active-site Proton donor; for delta-elimination activity is the R260.

Belongs to the FPG family. As to quaternary structure, monomer. The cofactor is Zn(2+).

It carries out the reaction Hydrolysis of DNA containing ring-opened 7-methylguanine residues, releasing 2,6-diamino-4-hydroxy-5-(N-methyl)formamidopyrimidine.. It catalyses the reaction 2'-deoxyribonucleotide-(2'-deoxyribose 5'-phosphate)-2'-deoxyribonucleotide-DNA = a 3'-end 2'-deoxyribonucleotide-(2,3-dehydro-2,3-deoxyribose 5'-phosphate)-DNA + a 5'-end 5'-phospho-2'-deoxyribonucleoside-DNA + H(+). In terms of biological role, involved in base excision repair of DNA damaged by oxidation or by mutagenic agents. Acts as a DNA glycosylase that recognizes and removes damaged bases. Has a preference for oxidized purines, such as 7,8-dihydro-8-oxoguanine (8-oxoG). Has AP (apurinic/apyrimidinic) lyase activity and introduces nicks in the DNA strand. Cleaves the DNA backbone by beta-delta elimination to generate a single-strand break at the site of the removed base with both 3'- and 5'-phosphates. The chain is Formamidopyrimidine-DNA glycosylase from Stutzerimonas stutzeri (strain A1501) (Pseudomonas stutzeri).